The primary structure comprises 109 residues: Synaptobrevin-1 (109 aa).

Positions 1–26 (MDAQGDAGAQGGSQGGPRPSNKRLQQ) are disordered. The Cytoplasmic portion of the chain corresponds to 1–86 (MDAQGDAGAQ…KRKYWWKNIK (86 aa)). Residues 23 to 83 (RLQQTQAQVD…ATLKRKYWWK (61 aa)) enclose the v-SNARE coiled-coil homology domain. Residues 87–107 (MMIIMCAIVVILIIIIVLWAG) form a helical; Anchor for type IV membrane protein membrane-spanning segment. Residues 108-109 (GK) lie on the Extracellular side of the membrane.

It belongs to the synaptobrevin family. As to quaternary structure, part of the SNARE core complex containing ric-4/SNAP25, snb-1/VAMP2 and unc-64/STX1A. This complex binds to cpx-1/CPLX1. In terms of tissue distribution, expressed in the nervous system notably the nerve ring, ventral cord and dorsal cord.

It localises to the cytoplasmic vesicle. It is found in the secretory vesicle. The protein localises to the synaptic vesicle membrane. Its subcellular location is the cell membrane. The protein resides in the synapse. It localises to the synaptosome. Involved in the targeting and/or fusion of transport vesicles to their target membrane. Acts in neuronal exocytosis of synaptic transmission. Likely to have a role in cholinergic transmisson. Required for viability, coordinated movement and M3 pharynx motor neuron function. The protein is Synaptobrevin-1 of Caenorhabditis elegans.